The primary structure comprises 168 residues: 2-C-methyl-D-erythritol 2,4-cyclodiphosphate synthase (168 aa).

Residues Asp-8 and His-10 each contribute to the a divalent metal cation site. Residues 8–10 and 34–35 each bind 4-CDP-2-C-methyl-D-erythritol 2-phosphate; these read DLH and HS. His-42 provides a ligand contact to a divalent metal cation. 4-CDP-2-C-methyl-D-erythritol 2-phosphate is bound by residues 56-58, 61-65, 132-135, and Arg-142; these read DIG, FPDTD, and TTTE.

This sequence belongs to the IspF family. In terms of assembly, homotrimer. It depends on a divalent metal cation as a cofactor.

The catalysed reaction is 4-CDP-2-C-methyl-D-erythritol 2-phosphate = 2-C-methyl-D-erythritol 2,4-cyclic diphosphate + CMP. The protein operates within isoprenoid biosynthesis; isopentenyl diphosphate biosynthesis via DXP pathway; isopentenyl diphosphate from 1-deoxy-D-xylulose 5-phosphate: step 4/6. Its function is as follows. Involved in the biosynthesis of isopentenyl diphosphate (IPP) and dimethylallyl diphosphate (DMAPP), two major building blocks of isoprenoid compounds. Catalyzes the conversion of 4-diphosphocytidyl-2-C-methyl-D-erythritol 2-phosphate (CDP-ME2P) to 2-C-methyl-D-erythritol 2,4-cyclodiphosphate (ME-CPP) with a corresponding release of cytidine 5-monophosphate (CMP). This Desulfosudis oleivorans (strain DSM 6200 / JCM 39069 / Hxd3) (Desulfococcus oleovorans) protein is 2-C-methyl-D-erythritol 2,4-cyclodiphosphate synthase.